Reading from the N-terminus, the 217-residue chain is Uracil-DNA glycosylase (217 aa).

Aspartate 62 serves as the catalytic Proton acceptor.

The protein belongs to the uracil-DNA glycosylase (UDG) superfamily. UNG family.

The protein localises to the cytoplasm. The enzyme catalyses Hydrolyzes single-stranded DNA or mismatched double-stranded DNA and polynucleotides, releasing free uracil.. Excises uracil residues from the DNA which can arise as a result of misincorporation of dUMP residues by DNA polymerase or due to deamination of cytosine. The protein is Uracil-DNA glycosylase of Streptococcus uberis (strain ATCC BAA-854 / 0140J).